The sequence spans 313 residues: Olfactory receptor 1D2 (313 aa).

Residues 1-25 (MDGGNQSEGSEFLLLGMSESPEQQR) lie on the Extracellular side of the membrane. N-linked (GlcNAc...) asparagine glycosylation is present at Asn-5. A helical membrane pass occupies residues 26-49 (ILFWMFLSMYLVTVLGNVLIILAI). The Cytoplasmic portion of the chain corresponds to 50-57 (SSDSRLHT). Residues 58–79 (PMYFFLANLSFTDLFFVTNTIP) form a helical membrane-spanning segment. Over 80-100 (KMLVNLQSQDKAISYAGCLTQ) the chain is Extracellular. Cys-97 and Cys-189 are joined by a disulfide. The helical transmembrane segment at 101–120 (LYFLLSLVTLDNLILAVMAY) threads the bilayer. Residues 121 to 139 (DRYVAICCPLHYVTAMSPR) lie on the Cytoplasmic side of the membrane. Residues 140–158 (LCILLLSLCWVFSVLYGLI) form a helical membrane-spanning segment. Residues 159–196 (HTLLMTRVTFCGSRKIHYLFCEMYFLLRLACSNIQINH) are Extracellular-facing. N-linked (GlcNAc...) asparagine glycosylation is present at Asn-195. A helical transmembrane segment spans residues 197–219 (TVLXATGCFIFLIPLGFMIXSYA). At 220-236 (RIVRAILRIPSATGKYK) the chain is on the cytoplasmic side. A helical transmembrane segment spans residues 237–259 (AFSTCASHLAVVSLFYGTLGMVY). The Extracellular segment spans residues 260-271 (LQPLQTYSTKDS). Residues 272–291 (VATVMYAVVTPMMNPFIYSL) form a helical membrane-spanning segment. At 292–313 (RNKDIHGALGRLLQGKAFQKLT) the chain is on the cytoplasmic side.

It belongs to the G-protein coupled receptor 1 family.

Its subcellular location is the cell membrane. Its function is as follows. Odorant receptor. The polypeptide is Olfactory receptor 1D2 (OR1D2) (Pongo pygmaeus (Bornean orangutan)).